A 253-amino-acid polypeptide reads, in one-letter code: Phosphate import ATP-binding protein PstB (253 aa).

One can recognise an ABC transporter domain in the interval 7-249 (ASAKNLNLWY…PQSSKTKRYI (243 aa)). 39–46 (GPSGCGKS) is a binding site for ATP.

This sequence belongs to the ABC transporter superfamily. Phosphate importer (TC 3.A.1.7) family. In terms of assembly, the complex is composed of two ATP-binding proteins (PstB), two transmembrane proteins (PstC and PstA) and a solute-binding protein (PstS).

Its subcellular location is the cell inner membrane. The enzyme catalyses phosphate(out) + ATP + H2O = ADP + 2 phosphate(in) + H(+). Its function is as follows. Part of the ABC transporter complex PstSACB involved in phosphate import. Responsible for energy coupling to the transport system. This Ehrlichia ruminantium (strain Gardel) protein is Phosphate import ATP-binding protein PstB.